The chain runs to 222 residues: uncharacterized protein (222 aa).

Residues 1 to 27 (MSFTRRKFVLGMGTVIFFTGSASSLLA) constitute a signal peptide (tat-type signal). 4Fe-4S ferredoxin-type domains follow at residues 37-66 (YAMI…PAQG), 83-114 (TQYH…RDEQ), and 115-144 (GIVR…LNPV). [4Fe-4S] cluster contacts are provided by cysteine 46, cysteine 49, cysteine 52, cysteine 56, cysteine 92, cysteine 95, cysteine 100, cysteine 104, cysteine 124, cysteine 127, cysteine 130, cysteine 134, cysteine 151, cysteine 154, cysteine 167, and cysteine 171.

In terms of processing, predicted to be exported by the Tat system. The position of the signal peptide cleavage has not been experimentally proven.

This is an uncharacterized protein from Escherichia coli O157:H7.